Here is a 308-residue protein sequence, read N- to C-terminus: Ribosomal RNA large subunit methyltransferase F (308 aa).

The protein belongs to the methyltransferase superfamily. METTL16/RlmF family.

It is found in the cytoplasm. The catalysed reaction is adenosine(1618) in 23S rRNA + S-adenosyl-L-methionine = N(6)-methyladenosine(1618) in 23S rRNA + S-adenosyl-L-homocysteine + H(+). In terms of biological role, specifically methylates the adenine in position 1618 of 23S rRNA. The chain is Ribosomal RNA large subunit methyltransferase F from Shigella dysenteriae serotype 1 (strain Sd197).